The sequence spans 158 residues: Ribonucleases P/MRP protein subunit POP6 (158 aa).

Residues 51–71 are a coiled coil; it reads KNDNIKKSVNKLDKQINMADR.

Component of nuclear RNase P and RNase MRP complexes. RNase P consists of an RNA moiety and at least 9 protein subunits including POP1, POP3, POP4, POP5, POP6, POP7, POP8, RPP1 and RPR2. RNase MRP complex consists of an RNA moiety and at least 10 protein subunits including POP1, POP3, POP4, POP5, POP6, POP7, POP8, RMP1, RPP1 and SNM1, many of which are shared with the RNase P complex.

It localises to the nucleus. The enzyme catalyses Endonucleolytic cleavage of RNA, removing 5'-extranucleotides from tRNA precursor.. Component of ribonuclease P, a protein complex that generates mature tRNA molecules by cleaving their 5'-ends. Also a component of RNase MRP, which cleaves pre-rRNA sequences. The chain is Ribonucleases P/MRP protein subunit POP6 (POP6) from Saccharomyces cerevisiae (strain ATCC 204508 / S288c) (Baker's yeast).